The chain runs to 380 residues: Cytochrome b (380 aa).

The next 4 helical transmembrane spans lie at 34–54, 78–99, 114–134, and 179–199; these read YGSLLGLCLMTQILTGLFLAM, WLMRNIHANGASFFFICIYLHI, WNIGVILLLLVMATAFVGYVL, and FFTFHFLLPFLIAGTSMLHLL. The heme b site is built by H84 and H98. Positions 183 and 197 each coordinate heme b. H202 contributes to the a ubiquinone binding site. Helical transmembrane passes span 227–247, 289–309, 321–341, and 348–368; these read YKDTFGFMIMLAALALLSTTN, LGGVLALLFSIMILMLIPSLH, LSQLMFWSIIANTLVLTWIGG, and FILIGQISSALYFILFLVLLP.

It belongs to the cytochrome b family. The cytochrome bc1 complex contains 3 respiratory subunits (MT-CYB, CYC1 and UQCRFS1), 2 core proteins (UQCRC1 and UQCRC2) and probably 6 low-molecular weight proteins. It depends on heme b as a cofactor.

The protein localises to the mitochondrion inner membrane. In terms of biological role, component of the ubiquinol-cytochrome c reductase complex (complex III or cytochrome b-c1 complex) that is part of the mitochondrial respiratory chain. The b-c1 complex mediates electron transfer from ubiquinol to cytochrome c. Contributes to the generation of a proton gradient across the mitochondrial membrane that is then used for ATP synthesis. The polypeptide is Cytochrome b (mt-cyb) (Typhlonectes natans (Rubber eel)).